Consider the following 225-residue polypeptide: ATP-dependent dethiobiotin synthetase BioD (225 aa).

ATP is bound at residue 12–17 (GVGKTV). Threonine 16 provides a ligand contact to Mg(2+). Lysine 37 is an active-site residue. A substrate-binding site is contributed by threonine 41. Residues aspartate 46, 105-108 (EGAG), 166-167 (GS), and 196-198 (PEG) each bind ATP. Residues aspartate 46 and glutamate 105 each coordinate Mg(2+).

This sequence belongs to the dethiobiotin synthetase family. In terms of assembly, homodimer. Mg(2+) serves as cofactor.

Its subcellular location is the cytoplasm. It carries out the reaction (7R,8S)-7,8-diammoniononanoate + CO2 + ATP = (4R,5S)-dethiobiotin + ADP + phosphate + 3 H(+). The protein operates within cofactor biosynthesis; biotin biosynthesis; biotin from 7,8-diaminononanoate: step 1/2. Its function is as follows. Catalyzes a mechanistically unusual reaction, the ATP-dependent insertion of CO2 between the N7 and N8 nitrogen atoms of 7,8-diaminopelargonic acid (DAPA, also called 7,8-diammoniononanoate) to form a ureido ring. The chain is ATP-dependent dethiobiotin synthetase BioD from Mycobacteroides abscessus (strain ATCC 19977 / DSM 44196 / CCUG 20993 / CIP 104536 / JCM 13569 / NCTC 13031 / TMC 1543 / L948) (Mycobacterium abscessus).